We begin with the raw amino-acid sequence, 458 residues long: Succinate-semialdehyde dehydrogenase [NADP(+)] 1 (458 aa).

NADP(+) is bound by residues 134-135 (WN), 158-161 (KHAS), and 210-211 (GS). Glutamate 232 (proton acceptor) is an active-site residue. NADP(+) is bound at residue leucine 233. Catalysis depends on cysteine 266, which acts as the Nucleophile. NADP(+) is bound at residue glutamate 363.

This sequence belongs to the aldehyde dehydrogenase family.

It catalyses the reaction succinate semialdehyde + NADP(+) + H2O = succinate + NADPH + 2 H(+). Catalyzes the NADP(+)-dependent oxidation of succinate semialdehyde to succinate. It is believed to be the main source of succinate semialdehyde dehydrogenase activity in Mycobacterium. This Mycobacterium ulcerans (strain Agy99) protein is Succinate-semialdehyde dehydrogenase [NADP(+)] 1 (gabD1).